The chain runs to 227 residues: ATP-dependent dethiobiotin synthetase BioD (227 aa).

13–18 (DVGKTV) provides a ligand contact to ATP. Thr17 contributes to the Mg(2+) binding site. Lys38 is an active-site residue. Residues Asp55, 116–119 (EGAG), 176–177 (NR), and 205–207 (PYI) contribute to the ATP site. Mg(2+) is bound by residues Asp55 and Glu116.

It belongs to the dethiobiotin synthetase family. Homodimer. It depends on Mg(2+) as a cofactor.

Its subcellular location is the cytoplasm. The catalysed reaction is (7R,8S)-7,8-diammoniononanoate + CO2 + ATP = (4R,5S)-dethiobiotin + ADP + phosphate + 3 H(+). The protein operates within cofactor biosynthesis; biotin biosynthesis; biotin from 7,8-diaminononanoate: step 1/2. Its function is as follows. Catalyzes a mechanistically unusual reaction, the ATP-dependent insertion of CO2 between the N7 and N8 nitrogen atoms of 7,8-diaminopelargonic acid (DAPA, also called 7,8-diammoniononanoate) to form a ureido ring. The polypeptide is ATP-dependent dethiobiotin synthetase BioD (Vibrio campbellii (strain ATCC BAA-1116)).